The primary structure comprises 300 residues: Flaviolin linalyltransferase (300 aa).

The protein belongs to the aromatic prenyltransferase family. Monomer.

The enzyme catalyses flaviolin + (2E)-geranyl diphosphate = 3-linalylflaviolin + diphosphate. Its activity is regulated as follows. Does not require magnesium or any other divalent metal ions for activity. Involved in the biosynthesis of furanonaphthoquinone I (FNQ I). Catalyzes C- and O-prenylations of different phenolic substrates. With flaviolin as substrate, catalyzes the formation of a carbon-carbon-bond between C-3 (rather than C-1) of geranyl diphosphate and C-3 of flaviolin. With 1,3-dihydroxynaphthalene and 4-hydroxybenzoate as substrates, catalyzes O-prenylations. This is Flaviolin linalyltransferase from Streptomyces virginiae (Streptomyces cinnamonensis).